The sequence spans 170 residues: Crossover junction endodeoxyribonuclease RuvC (170 aa).

Active-site residues include Asp-9, Glu-70, and Asp-145. The Mg(2+) site is built by Asp-9, Glu-70, and Asp-145.

Belongs to the RuvC family. Homodimer which binds Holliday junction (HJ) DNA. The HJ becomes 2-fold symmetrical on binding to RuvC with unstacked arms; it has a different conformation from HJ DNA in complex with RuvA. In the full resolvosome a probable DNA-RuvA(4)-RuvB(12)-RuvC(2) complex forms which resolves the HJ. Mg(2+) serves as cofactor.

The protein localises to the cytoplasm. The catalysed reaction is Endonucleolytic cleavage at a junction such as a reciprocal single-stranded crossover between two homologous DNA duplexes (Holliday junction).. Functionally, the RuvA-RuvB-RuvC complex processes Holliday junction (HJ) DNA during genetic recombination and DNA repair. Endonuclease that resolves HJ intermediates. Cleaves cruciform DNA by making single-stranded nicks across the HJ at symmetrical positions within the homologous arms, yielding a 5'-phosphate and a 3'-hydroxyl group; requires a central core of homology in the junction. The consensus cleavage sequence is 5'-(A/T)TT(C/G)-3'. Cleavage occurs on the 3'-side of the TT dinucleotide at the point of strand exchange. HJ branch migration catalyzed by RuvA-RuvB allows RuvC to scan DNA until it finds its consensus sequence, where it cleaves and resolves the cruciform DNA. This Chlamydia muridarum (strain MoPn / Nigg) protein is Crossover junction endodeoxyribonuclease RuvC.